Here is a 374-residue protein sequence, read N- to C-terminus: Palmitoyltransferase PFA5 (374 aa).

Over 1-13 the chain is Cytoplasmic; it reads MALSWNIRIRRRS. A helical membrane pass occupies residues 14–34; that stretch reads WFRFILPIIVLGLLCYGTWAY. Topologically, residues 35–55 are lumenal; sequence CHKLCYEQVDKRLRQKSVSVG. Residues 56–76 traverse the membrane as a helical segment; that stretch reads LICAVCFLDVVVIFIWLQIVI. Residues 77-173 lie on the Cytoplasmic side of the membrane; the sequence is LVGPGTQPHV…TVIGRDNYRL (97 aa). A DHHC domain is found at 129 to 179; the sequence is IWCSECQSLKMERTHHSSELGHCIPRFDHYCMWIGTVIGRDNYRLFVQFAA. The chain crosses the membrane as a helical span at residues 174–194; it reads FVQFAAYFSTLLLIMWVSICV. The Lumenal segment spans residues 195–217; the sequence is YIRIITQHNHNYSPNLNANIIST. A helical transmembrane segment spans residues 218–238; the sequence is LVFAILGWLLTASLLASSIFY. Residues 239–374 lie on the Cytoplasmic side of the membrane; sequence MSQNKTSLEA…ASGDDSDPAY (136 aa).

Belongs to the DHHC palmitoyltransferase family. PFA5 subfamily. Autopalmitoylated.

The protein resides in the membrane. It carries out the reaction L-cysteinyl-[protein] + hexadecanoyl-CoA = S-hexadecanoyl-L-cysteinyl-[protein] + CoA. This chain is Palmitoyltransferase PFA5 (PFA5), found in Saccharomyces cerevisiae (strain ATCC 204508 / S288c) (Baker's yeast).